Reading from the N-terminus, the 348-residue chain is MTTPLLGQSAEELRIWVESQGQPAYRAQQLHRWLYQRGVRSLMEITDWPKAWREQVHSVPVGRSQVVRQSAAADGTIKYLLAGADGETVETVGIPAAERLTVCVSSQVGCPMACRFCATGQSGFARNLGVHEIVDQVLTVQEGFGRRVSHVVFMGMGEPLLNLGAVVQALRVLNGDIGIGQRQITVSTVGVPGQIRRLGTYKLQITLAVSLHAPNQDLRLKLIPTAQHYPIEELLEDCRDYVETTNRRVSFEYTLLAGINDEPHHARELAAILRGFQSHVNLIPYNPIEGVEYERPGEARVRAFERELVRHKIAASVRHTRGLEEAAACGQLRRRSLSGEAQSASTRA.

The active-site Proton acceptor is Glu90. The Radical SAM core domain occupies 96-324; that stretch reads AAERLTVCVS…ASVRHTRGLE (229 aa). Cys103 and Cys329 are joined by a disulfide. Residues Cys110, Cys114, and Cys117 each coordinate [4Fe-4S] cluster. Residues 157–158, Ser187, 210–212, and Asn286 contribute to the S-adenosyl-L-methionine site; these read GE and SLH. Cys329 functions as the S-methylcysteine intermediate in the catalytic mechanism.

It belongs to the radical SAM superfamily. RlmN family. [4Fe-4S] cluster serves as cofactor.

The protein localises to the cytoplasm. The catalysed reaction is adenosine(2503) in 23S rRNA + 2 reduced [2Fe-2S]-[ferredoxin] + 2 S-adenosyl-L-methionine = 2-methyladenosine(2503) in 23S rRNA + 5'-deoxyadenosine + L-methionine + 2 oxidized [2Fe-2S]-[ferredoxin] + S-adenosyl-L-homocysteine. It catalyses the reaction adenosine(37) in tRNA + 2 reduced [2Fe-2S]-[ferredoxin] + 2 S-adenosyl-L-methionine = 2-methyladenosine(37) in tRNA + 5'-deoxyadenosine + L-methionine + 2 oxidized [2Fe-2S]-[ferredoxin] + S-adenosyl-L-homocysteine. Its function is as follows. Specifically methylates position 2 of adenine 2503 in 23S rRNA and position 2 of adenine 37 in tRNAs. In Gloeobacter violaceus (strain ATCC 29082 / PCC 7421), this protein is Probable dual-specificity RNA methyltransferase RlmN.